A 321-amino-acid polypeptide reads, in one-letter code: Quinol oxidase subunit 2 (321 aa).

Positions 1 to 25 (MIFLFRALKPLLVLALLTVVFVLGG) are cleaved as a signal peptide. C26 is lipidated: N-palmitoyl cysteine. The S-diacylglycerol cysteine moiety is linked to residue C26. The next 2 helical transmembrane spans lie at 49 to 69 (SIGF…IILV) and 90 to 110 (TFLE…LSVP). Residues 294–321 (QAVSPHSKTDPFENVKKNEFKKSDDTEE) are disordered. Over residues 300-321 (SKTDPFENVKKNEFKKSDDTEE) the composition is skewed to basic and acidic residues.

This sequence belongs to the cytochrome c oxidase subunit 2 family. Interacts with FloT.

It localises to the cell membrane. The protein resides in the membrane raft. The enzyme catalyses 2 a quinol + O2 = 2 a quinone + 2 H2O. In terms of biological role, catalyzes quinol oxidation with the concomitant reduction of oxygen to water. Major component for energy conversion during vegetative growth. Subunit II transfers the electrons from a quinol to the binuclear center of the catalytic subunit I. This is Quinol oxidase subunit 2 (qoxA) from Bacillus subtilis (strain 168).